The primary structure comprises 166 residues: Phosphopantetheine adenylyltransferase (166 aa).

Residue Ser9 coordinates substrate. ATP contacts are provided by residues 9 to 10 (SF) and His17. 3 residues coordinate substrate: Lys41, Leu74, and Lys88. Residues 89 to 91 (GLR), Glu99, and 123 to 129 (YVHLSST) contribute to the ATP site.

It belongs to the bacterial CoaD family. In terms of assembly, homohexamer. Mg(2+) serves as cofactor.

The protein resides in the cytoplasm. The catalysed reaction is (R)-4'-phosphopantetheine + ATP + H(+) = 3'-dephospho-CoA + diphosphate. The protein operates within cofactor biosynthesis; coenzyme A biosynthesis; CoA from (R)-pantothenate: step 4/5. Its function is as follows. Reversibly transfers an adenylyl group from ATP to 4'-phosphopantetheine, yielding dephospho-CoA (dPCoA) and pyrophosphate. This is Phosphopantetheine adenylyltransferase from Paenarthrobacter aurescens (strain TC1).